The chain runs to 511 residues: Cytochrome P450 4A7 (511 aa).

The propeptide occupies 1-4 (MSVS). The heme site is built by Glu322 and Cys458.

Belongs to the cytochrome P450 family. It depends on heme as a cofactor. As to expression, liver, kidney, small intestine.

It is found in the endoplasmic reticulum membrane. It localises to the microsome membrane. It catalyses the reaction an omega-methyl-long-chain fatty acid + reduced [NADPH--hemoprotein reductase] + O2 = an omega-hydroxy-long-chain fatty acid + oxidized [NADPH--hemoprotein reductase] + H2O + H(+). Functionally, cytochromes P450 are a group of heme-thiolate monooxygenases. In liver microsomes, this enzyme is involved in an NADPH-dependent electron transport pathway. It oxidizes a variety of structurally unrelated compounds, including steroids, fatty acids, and xenobiotics. In terms of biological role, the kidney P-450 system is rather specialized for the omega-hydroxylation of fatty acids. Both P450-KA1 and P450-KA2 catalyze the omega- and (omega-1)-hydroxylation of various fatty acids with no drug-metabolizing activity, and hydroxylate prostaglandin A1 and A2 solely at the omega-position. In Oryctolagus cuniculus (Rabbit), this protein is Cytochrome P450 4A7 (CYP4A7).